A 291-amino-acid chain; its full sequence is Nucleotide-binding protein CMM_1747 (291 aa).

Residue 15–22 (GMSGAGRS) participates in ATP binding. 66-69 (DVRG) is a binding site for GTP.

Belongs to the RapZ-like family.

Its function is as follows. Displays ATPase and GTPase activities. The polypeptide is Nucleotide-binding protein CMM_1747 (Clavibacter michiganensis subsp. michiganensis (strain NCPPB 382)).